A 565-amino-acid chain; its full sequence is NAD-dependent malic enzyme (565 aa).

The active-site Proton donor is the Tyr104. Arg157 contributes to the NAD(+) binding site. The active-site Proton acceptor is the Lys175. A divalent metal cation is bound by residues Glu246, Asp247, and Asp270. NAD(+) is bound by residues Asp270 and Asn418.

It belongs to the malic enzymes family. Homotetramer. The cofactor is Mg(2+). It depends on Mn(2+) as a cofactor.

The enzyme catalyses (S)-malate + NAD(+) = pyruvate + CO2 + NADH. The catalysed reaction is oxaloacetate + H(+) = pyruvate + CO2. This Serratia proteamaculans (strain 568) protein is NAD-dependent malic enzyme.